The sequence spans 484 residues: ETS translocation variant 4 (484 aa).

Lysine 6 participates in a covalent cross-link: Glycyl lysine isopeptide (Lys-Gly) (interchain with G-Cter in SUMO2). The tract at residues 90–115 (SPTTRIKKEPQSPRTDPALSCSRKPP) is disordered. Lysine 96 participates in a covalent cross-link: Glycyl lysine isopeptide (Lys-Gly) (interchain with G-Cter in SUMO). The residue at position 101 (serine 101) is a Phosphoserine. A Glycyl lysine isopeptide (Lys-Gly) (interchain with G-Cter in SUMO2) cross-link involves residue lysine 139. Phosphoserine occurs at positions 140, 149, and 214. Glycyl lysine isopeptide (Lys-Gly) (interchain with G-Cter in SUMO) cross-links involve residues lysine 226 and lysine 260. A Glycyl lysine isopeptide (Lys-Gly) (interchain with G-Cter in SUMO2) cross-link involves residue lysine 322. The ETS DNA-binding region spans 341-421 (LQLWQFLVAL…AGERYVYKFV (81 aa)).

This sequence belongs to the ETS family. Sumoylated; enhanced upon ERK/MAP kinase pathway activation, it positively regulates the transcriptional activator capacity. Sumoylation at Lys-96 probably requires phosphorylation at Ser-101. Transiently polysumoylated and desumoylated by SENP1. Sumoylation is a prerequisite to polyubiquitination which in turn increases proteasomal-mediated degradation. Probably polyubiquitinated by RNF4 and deubiquitinated by USP2. As to expression, expressed in keratinocytes.

The protein resides in the nucleus. Functionally, transcriptional activator. May play a role in keratinocyte differentiation. In terms of biological role, (Microbial infection) Binds to the enhancer of the adenovirus E1A gene and acts as a transcriptional activator; the core-binding sequence is 5'-[AC]GGA[AT]GT-3'. This chain is ETS translocation variant 4 (ETV4), found in Homo sapiens (Human).